Consider the following 188-residue polypeptide: MVSKKVYFLTSNPHKAKEVSDVLSQFSIEVVPLKGEKLEIQADSVEEVARFAAEEAKKRFKERPLLLEDSGLFVDALKGFPGPYSNYVYRTLGLEGLLKLMEGVEDRRARFVCAAALVKEDDKIVIEVGEVEGEIAYEPRGDKGFGFDPIFVPLGYEKTFAELGEEVKKRISHRARAFMKIAKHLSGE.

10 to 15 is a substrate binding site; sequence TSNPHK. Positions 39 and 69 each coordinate Mg(2+). The Proton acceptor role is filled by aspartate 69. Substrate contacts are provided by residues serine 70, 145-148, lysine 168, and 173-174; these read FGFD and HR.

Belongs to the HAM1 NTPase family. Homodimer. Mg(2+) serves as cofactor.

The catalysed reaction is XTP + H2O = XMP + diphosphate + H(+). It catalyses the reaction dITP + H2O = dIMP + diphosphate + H(+). It carries out the reaction ITP + H2O = IMP + diphosphate + H(+). In terms of biological role, pyrophosphatase that catalyzes the hydrolysis of nucleoside triphosphates to their monophosphate derivatives, with a high preference for the non-canonical purine nucleotides XTP (xanthosine triphosphate), dITP (deoxyinosine triphosphate) and ITP. Seems to function as a house-cleaning enzyme that removes non-canonical purine nucleotides from the nucleotide pool, thus preventing their incorporation into DNA/RNA and avoiding chromosomal lesions. The sequence is that of dITP/XTP pyrophosphatase from Ignicoccus hospitalis (strain KIN4/I / DSM 18386 / JCM 14125).